The following is a 306-amino-acid chain: MDRTTARPNRRAVLATGVGAALAATAAAAGPAHAAPGRGARVEGRLRALERTHDARLGAFAYDTGTGRTVAYRADERFPIASMFKTIAVAAVLRDLDRDGEVLARRVHYTADYVKRSGYSPVTGLPENVANGMTVAELCEATLTRSDNTAANLLLRDLGGPTAVTRFCRSVGDHVTRLDRWEPELNSAEPGRVTDTTSPRAIGRTYGRLILGDLLAAHDRERLTRWMLDNRTSDERFRKGLPADWLLADKTGGGDYGTNNDAGVAWPPGRPPVVLAVQTTRFTPDAEADNVLVAEAARLLAEAMTD.

Positions 1 to 34 (MDRTTARPNRRAVLATGVGAALAATAAAAGPAHA) form a signal peptide, tat-type signal. The active-site Acyl-ester intermediate is the serine 82. Substrate is bound at residue 250 to 252 (KTG).

Belongs to the class-A beta-lactamase family. Predicted to be exported by the Tat system. The position of the signal peptide cleavage has not been experimentally proven.

The catalysed reaction is a beta-lactam + H2O = a substituted beta-amino acid. The chain is Beta-lactamase (blaF) from Streptomyces fradiae (Streptomyces roseoflavus).